An 821-amino-acid polypeptide reads, in one-letter code: TORTIFOLIA1-like protein 1 (821 aa).

5 HEAT repeats span residues 69-110, 114-151, 163-201, 205-242, and 245-282; these read PDSP…SYTD, SQLA…QFLK, SSLV…SATE, AAFQ…VGAI, and QSLE…HSSS. The residue at position 406 (serine 406) is a Phosphoserine. Disordered stretches follow at residues 416–437 and 553–610; these read PSRQ…NTSV and MSIQ…RAWD. A coiled-coil region spans residues 501–554; sequence PPLQRQLLHLERQQTHIMNMLQDFMGGSHDGMISLENRVRGLERIVEEMSREMS. Residues 579 to 590 show a composition bias toward polar residues; it reads YGPSSRNTQTST.

In terms of tissue distribution, expressed at low levels in roots, hypocotyls, stems, flowers, siliques, cotyledons, and leaves. Particularly present in hydathodes of cotyledons and root hairs.

The protein resides in the cytoplasm. The protein localises to the cytoskeleton. Its function is as follows. Plant-specific microtubule-associated protein (MAP) that regulates the orientation of cortical microtubules and the direction of organ growth. The protein is TORTIFOLIA1-like protein 1 of Arabidopsis thaliana (Mouse-ear cress).